The primary structure comprises 599 residues: UvrABC system protein C (599 aa).

The GIY-YIG domain maps to Glu-19–Val-95. In terms of domain architecture, UVR spans Glu-206–Leu-241.

Belongs to the UvrC family. In terms of assembly, interacts with UvrB in an incision complex.

Its subcellular location is the cytoplasm. The UvrABC repair system catalyzes the recognition and processing of DNA lesions. UvrC both incises the 5' and 3' sides of the lesion. The N-terminal half is responsible for the 3' incision and the C-terminal half is responsible for the 5' incision. In Dictyoglomus thermophilum (strain ATCC 35947 / DSM 3960 / H-6-12), this protein is UvrABC system protein C.